A 158-amino-acid chain; its full sequence is Transcription elongation factor GreA (158 aa).

This sequence belongs to the GreA/GreB family.

Its function is as follows. Necessary for efficient RNA polymerase transcription elongation past template-encoded arresting sites. The arresting sites in DNA have the property of trapping a certain fraction of elongating RNA polymerases that pass through, resulting in locked ternary complexes. Cleavage of the nascent transcript by cleavage factors such as GreA or GreB allows the resumption of elongation from the new 3'terminus. GreA releases sequences of 2 to 3 nucleotides. This is Transcription elongation factor GreA from Rhizobium johnstonii (strain DSM 114642 / LMG 32736 / 3841) (Rhizobium leguminosarum bv. viciae).